The primary structure comprises 386 residues: Cobalt-precorrin-5B C(1)-methyltransferase (386 aa).

The protein belongs to the CbiD family.

The catalysed reaction is Co-precorrin-5B + S-adenosyl-L-methionine = Co-precorrin-6A + S-adenosyl-L-homocysteine. It functions in the pathway cofactor biosynthesis; adenosylcobalamin biosynthesis; cob(II)yrinate a,c-diamide from sirohydrochlorin (anaerobic route): step 6/10. Catalyzes the methylation of C-1 in cobalt-precorrin-5B to form cobalt-precorrin-6A. The chain is Cobalt-precorrin-5B C(1)-methyltransferase from Prochlorococcus marinus (strain MIT 9303).